A 483-amino-acid chain; its full sequence is FAD-linked oxidoreductase easE (483 aa).

The FAD-binding PCMH-type domain occupies 10 to 193; it reads QGRLPLYSAV…TEATVRVFSD (184 aa).

This sequence belongs to the oxygen-dependent FAD-linked oxidoreductase family. FAD serves as cofactor.

The protein operates within alkaloid biosynthesis; ergot alkaloid biosynthesis. Functionally, FAD-linked oxidoreductase; part of the gene cluster that mediates the biosynthesis of fungal ergot alkaloid. DmaW catalyzes the first step of ergot alkaloid biosynthesis by condensing dimethylallyl diphosphate (DMAP) and tryptophan to form 4-dimethylallyl-L-tryptophan. The second step is catalyzed by the methyltransferase easF that methylates 4-dimethylallyl-L-tryptophan in the presence of S-adenosyl-L-methionine, resulting in the formation of 4-dimethylallyl-L-abrine. The catalase easC and the FAD-dependent oxidoreductase easE then transform 4-dimethylallyl-L-abrine to chanoclavine-I which is further oxidized by easD in the presence of NAD(+), resulting in the formation of chanoclavine-I aldehyde. Agroclavine dehydrogenase easG then mediates the conversion of chanoclavine-I aldehyde to agroclavine via a non-enzymatic adduct reaction: the substrate is an iminium intermediate that is formed spontaneously from chanoclavine-I aldehyde in the presence of glutathione. The presence of easA is not required to complete this reaction. Further conversion of agroclavine to paspalic acid is a two-step process involving oxidation of agroclavine to elymoclavine and of elymoclavine to paspalic acid, the second step being performed by the elymoclavine oxidase cloA. Paspalic acid is then further converted to D-lysergic acid. Ergopeptines are assembled from D-lysergic acid and three different amino acids by the D-lysergyl-peptide-synthetases composed each of a monomudular and a trimodular nonribosomal peptide synthetase subunit. LpsB and lpsC encode the monomodular subunits responsible for D-lysergic acid activation and incorporation into the ergopeptine backbone. LpsA1 and A2 subunits encode the trimodular nonribosomal peptide synthetase assembling the tripeptide portion of ergopeptines. LpsA1 is responsible for formation of the major ergopeptine, ergotamine, and lpsA2 for alpha-ergocryptine, the minor ergopeptine of the total alkaloid mixture elaborated by C.purpurea. D-lysergyl-tripeptides are assembled by the nonribosomal peptide synthetases and released as N-(D-lysergyl-aminoacyl)-lactams. Cyclolization of the D-lysergyl-tripeptides is performed by the Fe(2+)/2-ketoglutarate-dependent dioxygenase easH which introduces a hydroxyl group into N-(D-lysergyl-aminoacyl)-lactam at alpha-C of the aminoacyl residue followed by spontaneous condensation with the terminal lactam carbonyl group. The chain is FAD-linked oxidoreductase easE from Claviceps purpurea (Ergot fungus).